Here is a 524-residue protein sequence, read N- to C-terminus: Lysine--tRNA ligase (524 aa).

The short motif at 39 to 47 (ASGIPHMGS) is the 'HIGH' region element. The short motif at 294–298 (KISKS) is the 'KMSKS' region element. Residue Lys297 participates in ATP binding.

Belongs to the class-I aminoacyl-tRNA synthetase family.

The protein resides in the cytoplasm. It carries out the reaction tRNA(Lys) + L-lysine + ATP = L-lysyl-tRNA(Lys) + AMP + diphosphate. This Cenarchaeum symbiosum protein is Lysine--tRNA ligase (lysS).